The sequence spans 864 residues: Ribosome biogenesis protein ERB1 (864 aa).

Over residues 1-52 the composition is skewed to basic and acidic residues; that stretch reads MAVDKGRRPVPPERRAQGRKRAEPGDVTIRETRTRPVHTPEPEPELLAKDGI. 2 disordered regions span residues 1–153 and 191–231; these read MAVD…VKEG and ESRN…STED. Positions 53–71 are enriched in acidic residues; sequence LELEDDDDNDDDDDDDDDD. Over residues 72 to 83 the composition is skewed to basic and acidic residues; that stretch reads KSNHHDGAPKNE. Residues 100 to 135 show a composition bias toward acidic residues; the sequence is DDGDEDEEEDDEDEDEDASDDEAFDSDDLENWDEEA. WD repeat units follow at residues 509-549, 559-599, 694-732, 735-774, 778-817, and 833-864; these read AHAP…CVAT, ADRS…KTMY, NSAM…LVKT, PGVR…RPYK, YHSR…DLLQ, and QDAL…LWTP.

The protein belongs to the WD repeat BOP1/ERB1 family. As to quaternary structure, component of the NOP7 complex, composed of ERB1, NOP7 and YTM1. The complex is held together by ERB1, which interacts with NOP7 via its N-terminal domain and with YTM1 via a high-affinity interaction between the seven-bladed beta-propeller domains of the 2 proteins. The NOP7 complex associates with the 66S pre-ribosome.

Its subcellular location is the nucleus. It localises to the nucleolus. The protein localises to the nucleoplasm. Functionally, component of the NOP7 complex, which is required for maturation of the 25S and 5.8S ribosomal RNAs and formation of the 60S ribosome. The polypeptide is Ribosome biogenesis protein ERB1 (Malassezia globosa (strain ATCC MYA-4612 / CBS 7966) (Dandruff-associated fungus)).